A 24-amino-acid polypeptide reads, in one-letter code: Coenzyme PQQ synthesis protein A (24 aa).

The pyrroloquinoline quinone (Glu-Tyr) cross-link spans Glu-16 to Tyr-20.

The protein belongs to the PqqA family.

It functions in the pathway cofactor biosynthesis; pyrroloquinoline quinone biosynthesis. Required for coenzyme pyrroloquinoline quinone (PQQ) biosynthesis. PQQ is probably formed by cross-linking a specific glutamate to a specific tyrosine residue and excising these residues from the peptide. The chain is Coenzyme PQQ synthesis protein A from Cupriavidus taiwanensis (strain DSM 17343 / BCRC 17206 / CCUG 44338 / CIP 107171 / LMG 19424 / R1) (Ralstonia taiwanensis (strain LMG 19424)).